The primary structure comprises 609 residues: mRNA cap guanine-N(7) methyltransferase (609 aa).

The segment covering 1–10 (MASKEEERTG) has biased composition (basic and acidic residues). A disordered region spans residues 1–252 (MASKEEERTG…EEDAMRNSQS (252 aa)). Composition is skewed to low complexity over residues 28 to 47 (QPVV…ATPT) and 70 to 87 (PQTT…QQKQ). Over residues 148-163 (ANDRPISKRKRLEERH) the composition is skewed to basic and acidic residues. Positions 193-205 (PRSPSPPLPPRSP) are enriched in pro residues. Positions 233 to 247 (RRQEERERALEEDAM) are enriched in basic and acidic residues. Positions 278-590 (SKIKGLRSFN…KYTPLGFTSA (313 aa)) constitute an mRNA cap 0 methyltransferase domain. 287 to 288 (NN) contributes to the mRNA binding site. S-adenosyl-L-methionine-binding positions include K291, G314, D338, D379, 422–424 (MFA), and Y427.

Belongs to the class I-like SAM-binding methyltransferase superfamily. mRNA cap 0 methyltransferase family.

The protein resides in the nucleus. The enzyme catalyses a 5'-end (5'-triphosphoguanosine)-ribonucleoside in mRNA + S-adenosyl-L-methionine = a 5'-end (N(7)-methyl 5'-triphosphoguanosine)-ribonucleoside in mRNA + S-adenosyl-L-homocysteine. Functionally, responsible for methylating the 5'-cap structure of mRNAs. The chain is mRNA cap guanine-N(7) methyltransferase (abd1) from Aspergillus niger (strain ATCC MYA-4892 / CBS 513.88 / FGSC A1513).